Reading from the N-terminus, the 342-residue chain is Glucan endo-1,3-beta-glucosidase (342 aa).

An N-terminal signal peptide occupies residues 1-26 (MLASSPMLLFLLSLLMAYNFDTTAGQ). Glu-119 acts as the Proton donor in catalysis. Glu-261 acts as the Nucleophile in catalysis.

Belongs to the glycosyl hydrolase 17 family. In terms of processing, the N-terminus is blocked.

The protein resides in the vacuole. It catalyses the reaction Hydrolysis of (1-&gt;3)-beta-D-glucosidic linkages in (1-&gt;3)-beta-D-glucans.. In terms of biological role, is thought to be an important plant defense-related product against fungal pathogens. Accumulation of the glucanase can be detected as early as 4 hours after inoculation. The polypeptide is Glucan endo-1,3-beta-glucosidase (BGL) (Brassica campestris (Field mustard)).